A 252-amino-acid chain; its full sequence is dITP/XTP pyrophosphatase (252 aa).

Residue 7–12 (THNEGK) coordinates substrate. The Proton acceptor role is filled by D74. D74 provides a ligand contact to Mg(2+). Substrate is bound by residues S75 and 193-196 (FGYD). The segment at 201–224 (PDDQPAGRVSTEPDHEGEPLTSAE) is disordered. Substrate is bound by residues K230 and 235–236 (HR).

Belongs to the HAM1 NTPase family. Homodimer. It depends on Mg(2+) as a cofactor.

It carries out the reaction XTP + H2O = XMP + diphosphate + H(+). The enzyme catalyses dITP + H2O = dIMP + diphosphate + H(+). It catalyses the reaction ITP + H2O = IMP + diphosphate + H(+). Functionally, pyrophosphatase that catalyzes the hydrolysis of nucleoside triphosphates to their monophosphate derivatives, with a high preference for the non-canonical purine nucleotides XTP (xanthosine triphosphate), dITP (deoxyinosine triphosphate) and ITP. Seems to function as a house-cleaning enzyme that removes non-canonical purine nucleotides from the nucleotide pool, thus preventing their incorporation into DNA/RNA and avoiding chromosomal lesions. This Bifidobacterium longum subsp. infantis (strain ATCC 15697 / DSM 20088 / JCM 1222 / NCTC 11817 / S12) protein is dITP/XTP pyrophosphatase.